The following is a 175-amino-acid chain: Viral interleukin-10 homolog (175 aa).

A signal peptide spans 1 to 19; sequence MLSVMVSSSLVLIVFFLGA. 2 disulfides stabilise this stretch: Cys-37-Cys-127 and Cys-81-Cys-132. An N-linked (GlcNAc...) asparagine; by host glycan is attached at Asn-151.

This sequence belongs to the IL-10 family. Homodimer; disulfide-linked.

It is found in the secreted. Functionally, functional viral IL-10 homolog. Can bind to the human IL-10 receptor and compete with human IL-10 for binding sites. Requires both subunits of the human IL-10 receptor complex to induce signal transduction events and biological activities. IL-10 signaling pathway has several immunosuppressive activities that are exploited by the virus. Inhibits TLR-induced type I interferon production in host plasmacytoid dendritic cells. The protein is Viral interleukin-10 homolog (UL111A) of Human cytomegalovirus (strain AD169) (HHV-5).